The chain runs to 163 residues: Aspartate carbamoyltransferase regulatory chain (163 aa).

Zn(2+)-binding residues include cysteine 113, cysteine 118, cysteine 143, and cysteine 146.

This sequence belongs to the PyrI family. In terms of assembly, contains catalytic and regulatory chains. The cofactor is Zn(2+).

Its function is as follows. Involved in allosteric regulation of aspartate carbamoyltransferase. This chain is Aspartate carbamoyltransferase regulatory chain, found in Caldivirga maquilingensis (strain ATCC 700844 / DSM 13496 / JCM 10307 / IC-167).